Reading from the N-terminus, the 171-residue chain is Adenine phosphoribosyltransferase (171 aa).

It belongs to the purine/pyrimidine phosphoribosyltransferase family. As to quaternary structure, homodimer.

Its subcellular location is the cytoplasm. It catalyses the reaction AMP + diphosphate = 5-phospho-alpha-D-ribose 1-diphosphate + adenine. It functions in the pathway purine metabolism; AMP biosynthesis via salvage pathway; AMP from adenine: step 1/1. Catalyzes a salvage reaction resulting in the formation of AMP, that is energically less costly than de novo synthesis. In Mycoplasmopsis fermentans (strain ATCC 19989 / NBRC 14854 / NCTC 10117 / PG18) (Mycoplasma fermentans), this protein is Adenine phosphoribosyltransferase.